The sequence spans 722 residues: Host cell factor 2 (722 aa).

Kelch repeat units follow at residues 34–79 (LMII…GFVC), 83–130 (RILV…RLGH), 207–255 (KMYV…VIGN), and 257–303 (MYIF…VSDS). 3 consecutive Fibronectin type-III domains span residues 359–460 (APSQ…VDSS), 514–604 (TPSN…TCTP), and 606–716 (FPGA…DQEK). The segment at 398–476 (ATSSDSSAAP…LAPNTSNNSS (79 aa)) is disordered. Polar residues predominate over residues 419–436 (QGSNSTLHNSVSDTVNST).

Binds KMT2A/MLL1. Component of the MLL1/MLL complex, at least composed of KMT2A/MLL1, ASH2L, RBBP5, DPY30, WDR5, MEN1, HCFC1 and HCFC2. Interacts with TASOR. As to expression, expressed in the spermatogonia, spermatocytes and ovary.

Its subcellular location is the cytoplasm. It is found in the nucleus. The polypeptide is Host cell factor 2 (Hcfc2) (Mus musculus (Mouse)).